A 239-amino-acid chain; its full sequence is Pathogenesis-related protein 5 (239 aa).

The signal sequence occupies residues 1-23; that stretch reads MANISSIHILFLVFITSGIAVMA. 8 cysteine pairs are disulfide-bonded: Cys32-Cys238, Cys79-Cys89, Cys94-Cys99, Cys146-Cys228, Cys151-Cys211, Cys159-Cys174, Cys178-Cys187, and Cys188-Cys198.

It belongs to the thaumatin family.

Its subcellular location is the secreted. It localises to the extracellular space. The protein localises to the apoplast. Functionally, partially responsible for acquired pathogen resistance. The sequence is that of Pathogenesis-related protein 5 from Arabidopsis thaliana (Mouse-ear cress).